We begin with the raw amino-acid sequence, 188 residues long: MKELLYYTFIETEVTGAFLVFREKTQNLVFASLGNDKLFLLGKVEGFLKKHEKQDTMYDLQELKEAETYKKSIENYTICLENKMPLPSGAIPFEFLFGTDFQRKVWNELLNVEHGHVVTYGDIAKRIGKPTAARSVGRACGSNNLALLVPCHRIVGSNRKLTGYKWSCKLKEQLLNNEKENSLSLSRL.

DNA contacts are provided by Y120, G121, and R134. C151 serves as the catalytic Nucleophile; methyl group acceptor. Residue S157 coordinates DNA.

The protein belongs to the MGMT family.

Its subcellular location is the nucleus. It catalyses the reaction a 6-O-methyl-2'-deoxyguanosine in DNA + L-cysteinyl-[protein] = S-methyl-L-cysteinyl-[protein] + a 2'-deoxyguanosine in DNA. The catalysed reaction is a 4-O-methyl-thymidine in DNA + L-cysteinyl-[protein] = a thymidine in DNA + S-methyl-L-cysteinyl-[protein]. In terms of biological role, involved in the cellular defense against the biological effects of O6-methylguanine (O6-MeG) and O4-methylthymine (O4-MeT) in DNA. Repairs the methylated nucleobase in DNA by stoichiometrically transferring the methyl group to a cysteine residue in the enzyme. This is a suicide reaction: the enzyme is irreversibly inactivated. Prefers double-stranded DNA over single-stranded DNA as substrate. In Saccharomyces cerevisiae (strain ATCC 204508 / S288c) (Baker's yeast), this protein is Methylated-DNA--protein-cysteine methyltransferase (MGT1).